A 56-amino-acid polypeptide reads, in one-letter code: Protein SspF (56 aa).

It belongs to the alpha/beta-type SASP family.

Its function is as follows. May play some important role in either sporulation or the dormant spore. This is Protein SspF (sspF) from Priestia megaterium (strain ATCC 12872 / QMB1551) (Bacillus megaterium).